A 205-amino-acid polypeptide reads, in one-letter code: Holliday junction branch migration complex subunit RuvA (205 aa).

Residues M1–I64 form a domain I region. A domain II region spans residues S65 to D143. The interval Q136–H157 is disordered. The flexible linker stretch occupies residues R144–E156. The tract at residues H157 to S205 is domain III.

This sequence belongs to the RuvA family. In terms of assembly, homotetramer. Forms an RuvA(8)-RuvB(12)-Holliday junction (HJ) complex. HJ DNA is sandwiched between 2 RuvA tetramers; dsDNA enters through RuvA and exits via RuvB. An RuvB hexamer assembles on each DNA strand where it exits the tetramer. Each RuvB hexamer is contacted by two RuvA subunits (via domain III) on 2 adjacent RuvB subunits; this complex drives branch migration. In the full resolvosome a probable DNA-RuvA(4)-RuvB(12)-RuvC(2) complex forms which resolves the HJ.

The protein localises to the cytoplasm. In terms of biological role, the RuvA-RuvB-RuvC complex processes Holliday junction (HJ) DNA during genetic recombination and DNA repair, while the RuvA-RuvB complex plays an important role in the rescue of blocked DNA replication forks via replication fork reversal (RFR). RuvA specifically binds to HJ cruciform DNA, conferring on it an open structure. The RuvB hexamer acts as an ATP-dependent pump, pulling dsDNA into and through the RuvAB complex. HJ branch migration allows RuvC to scan DNA until it finds its consensus sequence, where it cleaves and resolves the cruciform DNA. The sequence is that of Holliday junction branch migration complex subunit RuvA from Idiomarina loihiensis (strain ATCC BAA-735 / DSM 15497 / L2-TR).